The following is a 199-amino-acid chain: Recombination protein RecR (199 aa).

A C4-type zinc finger spans residues 57–72; it reads CRQCRTLTEDELCPQC. One can recognise a Toprim domain in the interval 80 to 174; that stretch reads SLLCVVQSPV…TISRIAHGVP (95 aa).

Belongs to the RecR family.

May play a role in DNA repair. It seems to be involved in an RecBC-independent recombinational process of DNA repair. It may act with RecF and RecO. This is Recombination protein RecR from Stutzerimonas stutzeri (strain A1501) (Pseudomonas stutzeri).